Consider the following 424-residue polypeptide: Dihydroorotase (424 aa).

Zn(2+)-binding residues include histidine 58 and histidine 60. Residues histidine 60 to arginine 62 and asparagine 92 each bind substrate. The Zn(2+) site is built by aspartate 150, histidine 177, and histidine 230. Asparagine 276 provides a ligand contact to substrate. Position 303 (aspartate 303) interacts with Zn(2+). Aspartate 303 is an active-site residue. Residues histidine 307 and phenylalanine 321–glycine 322 contribute to the substrate site.

This sequence belongs to the metallo-dependent hydrolases superfamily. DHOase family. Class I DHOase subfamily. The cofactor is Zn(2+).

It catalyses the reaction (S)-dihydroorotate + H2O = N-carbamoyl-L-aspartate + H(+). The protein operates within pyrimidine metabolism; UMP biosynthesis via de novo pathway; (S)-dihydroorotate from bicarbonate: step 3/3. Catalyzes the reversible cyclization of carbamoyl aspartate to dihydroorotate. This is Dihydroorotase from Staphylococcus aureus (strain MRSA252).